The chain runs to 163 residues: Phospholipase A2 homolog 3 (163 aa).

Residues 1 to 43 (MARGGSFSRLRLRAGVVVAAAAAALLLFAVVAPPAAALNIGLQ) form the signal peptide. 6 disulfides stabilise this stretch: C55-C83, C59-C89, C64-C137, C76-C96, C95-C121, and C102-C114. 3 residues coordinate Ca(2+): Y75, G77, and Y80. H99 is a catalytic residue. D100 serves as a coordination point for Ca(2+).

It belongs to the phospholipase A2 family. Ca(2+) serves as cofactor.

It localises to the secreted. It catalyses the reaction a 1,2-diacyl-sn-glycero-3-phosphocholine + H2O = a 1-acyl-sn-glycero-3-phosphocholine + a fatty acid + H(+). Its activity is regulated as follows. Inhibited by EGTA. PA2 catalyzes the calcium-dependent hydrolysis of the 2-acyl groups in 3-sn-phosphoglycerides. Releases lysophospholipids (LPLs) and free fatty acids (FFAs) from membrane phospholipids in response to hormones and other external stimuli. The chain is Phospholipase A2 homolog 3 (PLA2-III) from Oryza sativa subsp. japonica (Rice).